The following is a 57-amino-acid chain: uncharacterized protein (57 aa).

A helical membrane pass occupies residues 24–44 (LWVTLLLTMFFTAVEIIGGLI).

It to cation A.eutrophus efflux system protein CzcD.

The protein resides in the cell membrane. This is an uncharacterized protein from Bacillus caldolyticus.